Reading from the N-terminus, the 111-residue chain is Putative ciliary rootlet coiled-coil protein-like 1 protein (111 aa).

Residues 21-86 (MELELSVTKL…RQAEQEATVA (66 aa)) are a coiled coil.

Belongs to the rootletin family.

This chain is Putative ciliary rootlet coiled-coil protein-like 1 protein (CROCCP2), found in Homo sapiens (Human).